The sequence spans 499 residues: Hexokinase-2, chloroplastic (499 aa).

The transit peptide at 1–30 directs the protein to the chloroplast; the sequence is MSVTVSSPAGRSFHISRSPYKKISKPRVII. In terms of domain architecture, Hexokinase spans 39–490; the sequence is LAVAPILTKL…SGIGAALLAA (452 aa). The hexokinase small subdomain stretch occupies residues 94 to 232; the sequence is TGNEKGLFYA…GLGMQVSALV (139 aa). Glycine 108, threonine 109, and asparagine 110 together coordinate ADP. The D-glucose site is built by threonine 198, lysine 199, asparagine 233, and aspartate 234. Positions 233–479 are hexokinase large subdomain; sequence NDTVATLAGA…KNVVIEHSKD (247 aa). Threonine 257 provides a ligand contact to ADP. D-glucose is bound by residues asparagine 260, glutamate 288, and glutamate 318. Glycine 444 provides a ligand contact to ADP.

It belongs to the hexokinase family. In terms of tissue distribution, expressed in vascular starch sheath, xylem parenchyma, guard cells and root tips.

Its subcellular location is the plastid. It is found in the chloroplast stroma. The enzyme catalyses a D-hexose + ATP = a D-hexose 6-phosphate + ADP + H(+). The catalysed reaction is D-fructose + ATP = D-fructose 6-phosphate + ADP + H(+). It catalyses the reaction D-glucose + ATP = D-glucose 6-phosphate + ADP + H(+). The protein operates within carbohydrate metabolism; hexose metabolism. It participates in carbohydrate degradation; glycolysis; D-glyceraldehyde 3-phosphate and glycerone phosphate from D-glucose: step 1/4. In terms of biological role, fructose and glucose phosphorylating enzyme. The chain is Hexokinase-2, chloroplastic (HXK2) from Nicotiana tabacum (Common tobacco).